The primary structure comprises 91 residues: Uteroglobin (91 aa).

A signal peptide spans 1–21 (MKLAVTLTLVTLALCCSSASA).

Belongs to the secretoglobin family. In terms of assembly, antiparallel homodimer; disulfide-linked. Interaction with LMBR1L has been observed in PubMed:16423471, but not in PubMed:23964685. In terms of tissue distribution, club cells (nonciliated cells of the surface epithelium of the pulmonary airways).

Its subcellular location is the secreted. Functionally, binds phosphatidylcholine, phosphatidylinositol, polychlorinated biphenyls (PCB) and weakly progesterone, potent inhibitor of phospholipase A2. This chain is Uteroglobin (SCGB1A1), found in Homo sapiens (Human).